We begin with the raw amino-acid sequence, 660 residues long: Threonine--tRNA ligase (660 aa).

A TGS domain is found at 1–64 (MSHSVSLTFP…TEGRIEIVTR (64 aa)). The segment at 245–547 (DHRRLGREMD…LLENFAGHMP (303 aa)) is catalytic. Residues Cys-341, His-392, and His-524 each coordinate Zn(2+).

It belongs to the class-II aminoacyl-tRNA synthetase family. As to quaternary structure, homodimer. The cofactor is Zn(2+).

The protein localises to the cytoplasm. It carries out the reaction tRNA(Thr) + L-threonine + ATP = L-threonyl-tRNA(Thr) + AMP + diphosphate + H(+). In terms of biological role, catalyzes the attachment of threonine to tRNA(Thr) in a two-step reaction: L-threonine is first activated by ATP to form Thr-AMP and then transferred to the acceptor end of tRNA(Thr). Also edits incorrectly charged L-seryl-tRNA(Thr). The protein is Threonine--tRNA ligase of Sinorhizobium medicae (strain WSM419) (Ensifer medicae).